Consider the following 426-residue polypeptide: Putative nickel insertion protein (426 aa).

This sequence belongs to the LarC family.

This Nostoc sp. (strain PCC 7120 / SAG 25.82 / UTEX 2576) protein is Putative nickel insertion protein.